The following is a 222-amino-acid chain: NADH dehydrogenase [ubiquinone] iron-sulfur protein 8-A, mitochondrial (222 aa).

2 4Fe-4S ferredoxin-type domains span residues arginine 114 to glutamate 143 and threonine 153 to asparagine 182. [4Fe-4S] cluster contacts are provided by cysteine 123, cysteine 126, cysteine 129, cysteine 133, cysteine 162, cysteine 165, cysteine 168, and cysteine 172.

Belongs to the complex I 23 kDa subunit family. In terms of assembly, complex I is composed of at least 49 different subunits. This is a component of the iron-sulfur (IP) fragment of the enzyme. [4Fe-4S] cluster serves as cofactor.

The protein resides in the mitochondrion. The catalysed reaction is a ubiquinone + NADH + 5 H(+)(in) = a ubiquinol + NAD(+) + 4 H(+)(out). Functionally, core subunit of the mitochondrial membrane respiratory chain NADH dehydrogenase (Complex I) that is believed to belong to the minimal assembly required for catalysis. Complex I functions in the transfer of electrons from NADH to the respiratory chain. The immediate electron acceptor for the enzyme is believed to be ubiquinone. May donate electrons to ubiquinone. The polypeptide is NADH dehydrogenase [ubiquinone] iron-sulfur protein 8-A, mitochondrial (Arabidopsis thaliana (Mouse-ear cress)).